Here is a 157-residue protein sequence, read N- to C-terminus: UPF0225 protein PSPTO_4127 (157 aa).

The protein belongs to the UPF0225 family.

This Pseudomonas syringae pv. tomato (strain ATCC BAA-871 / DC3000) protein is UPF0225 protein PSPTO_4127.